We begin with the raw amino-acid sequence, 101 residues long: Replication restart protein PriB (101 aa).

Residues 1-101 (MATNHLVLSG…LHAENVELKT (101 aa)) form the SSB domain.

This sequence belongs to the PriB family. Homodimer. Interacts with PriA and DnaT. Component of the replication restart primosome. Primosome assembly occurs via a 'hand-off' mechanism. PriA binds to replication forks, subsequently PriB then DnaT bind; DnaT then displaces ssDNA to generate the helicase loading substrate.

Functionally, involved in the restart of stalled replication forks, which reloads the replicative helicase on sites other than the origin of replication; the PriA-PriB pathway is the major replication restart pathway. During primosome assembly it facilitates complex formation between PriA and DnaT on DNA; stabilizes PriA on DNA. Stimulates the DNA unwinding activity of PriA helicase. This chain is Replication restart protein PriB, found in Shewanella sediminis (strain HAW-EB3).